A 112-amino-acid chain; its full sequence is MTGKTVTRADLAESVFRKVGLSRTESAELVETVIDEVCNAIVRGETVKLSSFATFQVRDKNERIGRNPKTGEEVPISPRRVMTFKASNVLKTRILKAHVARKVKLKPQNPAS.

It belongs to the bacterial histone-like protein family. In terms of assembly, heterodimer of an alpha and a beta chain.

This protein is one of the two subunits of integration host factor, a specific DNA-binding protein that functions in genetic recombination as well as in transcriptional and translational control. The chain is Integration host factor subunit alpha from Rhizobium leguminosarum bv. trifolii (strain WSM2304).